The primary structure comprises 331 residues: Protein RecA (331 aa).

Residue 66-73 (GPESSGKT) participates in ATP binding.

Belongs to the RecA family.

It is found in the cytoplasm. In terms of biological role, can catalyze the hydrolysis of ATP in the presence of single-stranded DNA, the ATP-dependent uptake of single-stranded DNA by duplex DNA, and the ATP-dependent hybridization of homologous single-stranded DNAs. It interacts with LexA causing its activation and leading to its autocatalytic cleavage. This Lactobacillus delbrueckii subsp. bulgaricus (strain ATCC 11842 / DSM 20081 / BCRC 10696 / JCM 1002 / NBRC 13953 / NCIMB 11778 / NCTC 12712 / WDCM 00102 / Lb 14) protein is Protein RecA.